Here is a 422-residue protein sequence, read N- to C-terminus: Cell division protein DivIB (422 aa).

Composition is skewed to basic and acidic residues over residues 1–23 and 62–75; these read MVDWDKEAQRFRQRRQEAEKQEE and EEAKGEDFAKDQEQ. Residues 1–77 form a disordered region; that stretch reads MVDWDKEAQR…DFAKDQEQKH (77 aa). The Cytoplasmic segment spans residues 1-109; the sequence is MVDWDKEAQR…LQLKSVSWSR (109 aa). The chain crosses the membrane as a helical span at residues 110–130; that stretch reads LILAAAFLFMIIFSAFWLSPL. One can recognise a POTRA domain in the interval 131–202; sequence NRIATIEVSG…RTVEVNVQEF (72 aa). Over 131–422 the chain is Extracellular; it reads NRIATIEVSG…TVTQTRSSNS (292 aa). The tract at residues 329–422 is disordered; it reads NPLNDPFASP…TVTQTRSSNS (94 aa). Over residues 338-379 the composition is skewed to basic and acidic residues; that stretch reads PEEKASYQEKVDQAKEKSKEKQAKADKHSSESKLGDKPKPRG. Residues 389 to 422 show a composition bias toward low complexity; sequence TSSQRQTSSQSSPRPGTNSSQQSSTVTQTRSSNS.

It belongs to the FtsQ/DivIB family. DivIB subfamily.

The protein localises to the cell membrane. Cell division protein that may be involved in stabilizing or promoting the assembly of the division complex. The chain is Cell division protein DivIB from Aerococcus urinae (strain CCUG 59500 / ACS-120-V-Col10a).